A 121-amino-acid chain; its full sequence is Ribosome-binding factor A (121 aa).

Belongs to the RbfA family. In terms of assembly, monomer. Binds 30S ribosomal subunits, but not 50S ribosomal subunits or 70S ribosomes.

The protein resides in the cytoplasm. Functionally, one of several proteins that assist in the late maturation steps of the functional core of the 30S ribosomal subunit. Associates with free 30S ribosomal subunits (but not with 30S subunits that are part of 70S ribosomes or polysomes). Required for efficient processing of 16S rRNA. May interact with the 5'-terminal helix region of 16S rRNA. The chain is Ribosome-binding factor A from Lactobacillus acidophilus (strain ATCC 700396 / NCK56 / N2 / NCFM).